The chain runs to 69 residues: DNA gyrase inhibitor YacG (69 aa).

Residues Cys7, Cys10, Cys26, and Cys30 each coordinate Zn(2+).

The protein belongs to the DNA gyrase inhibitor YacG family. As to quaternary structure, interacts with GyrB. The cofactor is Zn(2+).

Inhibits all the catalytic activities of DNA gyrase by preventing its interaction with DNA. Acts by binding directly to the C-terminal domain of GyrB, which probably disrupts DNA binding by the gyrase. This is DNA gyrase inhibitor YacG from Shewanella baltica (strain OS223).